Here is a 213-residue protein sequence, read N- to C-terminus: High frequency lysogenization protein HflD (213 aa).

Positions 99–126 form a coiled coil; sequence LSSAKGALDTLGNRINGLQRQLEHFDLQ.

Belongs to the HflD family. Interacts with CII protein from phage lambda.

The protein localises to the cytoplasm. It localises to the cell inner membrane. Its function is as follows. Negative regulator of phage lambda lysogenization. Contributes to the degradation of the phage regulatory protein CII. Acts probably by holding CII on the membrane surface, away from the target promoters, but close to the FtsH protease. The polypeptide is High frequency lysogenization protein HflD (Escherichia coli O157:H7).